The following is a 101-amino-acid chain: Large ribosomal subunit protein bL21 (101 aa).

It belongs to the bacterial ribosomal protein bL21 family. As to quaternary structure, part of the 50S ribosomal subunit. Contacts protein L20.

Functionally, this protein binds to 23S rRNA in the presence of protein L20. This is Large ribosomal subunit protein bL21 from Metamycoplasma arthritidis (strain 158L3-1) (Mycoplasma arthritidis).